Reading from the N-terminus, the 330-residue chain is Aspartate--ammonia ligase (330 aa).

This sequence belongs to the class-II aminoacyl-tRNA synthetase family. AsnA subfamily.

It is found in the cytoplasm. It catalyses the reaction L-aspartate + NH4(+) + ATP = L-asparagine + AMP + diphosphate + H(+). It participates in amino-acid biosynthesis; L-asparagine biosynthesis; L-asparagine from L-aspartate (ammonia route): step 1/1. The polypeptide is Aspartate--ammonia ligase (Shigella flexneri serotype 5b (strain 8401)).